The sequence spans 164 residues: Diphosphoinositol polyphosphate phosphohydrolase 3-alpha (164 aa).

Substrate contacts are provided by residues R9, K17–R19, and S38–R40. The Nudix hydrolase domain occupies K17–K144. The Mg(2+) site is built by G49 and E65. Residues G50–G71 carry the Nudix box motif. E68 acts as the Proton acceptor in catalysis. E69 is a Mg(2+) binding site. Substrate is bound by residues R89–H91, R115, and K133. Residues K144–P164 form a disordered region.

It belongs to the Nudix hydrolase family. DIPP subfamily. Mg(2+) is required as a cofactor. Mn(2+) serves as cofactor. In terms of tissue distribution, mainly expressed in testis, liver kidney and, at lower level, in heart, brain, spleen, lung and skeletal muscle.

The protein resides in the cytoplasm. It carries out the reaction diphospho-myo-inositol polyphosphate + H2O = myo-inositol polyphosphate + phosphate.. The enzyme catalyses P(1),P(6)-bis(5'-adenosyl) hexaphosphate + H2O = adenosine 5'-pentaphosphate + AMP + 2 H(+). The catalysed reaction is P(1),P(5)-bis(5'-adenosyl) pentaphosphate + H2O = adenosine 5'-tetraphosphate + AMP + 2 H(+). Cleaves a beta-phosphate from the diphosphate groups in PP-InsP5 (diphosphoinositol pentakisphosphate), suggesting that it may play a role in signal transduction. Also able to catalyze the hydrolysis of dinucleoside oligophosphates, with Ap6A and Ap5A being the preferred substrates. The major reaction products are ADP and p4a from Ap6A and ADP and ATP from Ap5A. Also able to hydrolyze 5-phosphoribose 1-diphosphate; however, the relevance of such activity in vivo remains unclear. This Mus musculus (Mouse) protein is Diphosphoinositol polyphosphate phosphohydrolase 3-alpha.